Consider the following 1715-residue polypeptide: Sodium channel protein type 4 subunit alpha B (1715 aa).

Residues 1 to 126 (MGTLLPPVGS…IFAIKILVHS (126 aa)) lie on the Cytoplasmic side of the membrane. An I repeat occupies 108–431 (LLSPFNSMRI…VVAMAYAEQN (324 aa)). A helical transmembrane segment spans residues 127 to 145 (LFSLFIMATILTNCVFMTL). Residues 146–152 (SDPPAWS) are Extracellular-facing. Residues 153 to 173 (KTVEYVFTFIYTFEATIKVVS) traverse the membrane as a helical segment. Topologically, residues 174-187 (RGFCVGQFTFLKDP) are cytoplasmic. The helical transmembrane segment at 188-205 (WNWLDFMVISMAYLTELV) threads the bilayer. Over 206-211 (DLGNVS) the chain is Extracellular. Residue asparagine 209 is glycosylated (N-linked (GlcNAc...) asparagine). Residues 212 to 228 (VLRTFRVLRALKTITVI) form a helical membrane-spanning segment. Topologically, residues 229-247 (PGLKTIVGALIQSVKKLAD) are cytoplasmic. A helical membrane pass occupies residues 248–267 (AMVLTVFCLSVFALIGLQLF). Residues 268–368 (MGNLRQKCVL…PNYGYTSYDS (101 aa)) are Extracellular-facing. The cysteines at positions 275 and 337 are disulfide-linked. Residues asparagine 284, asparagine 304, and asparagine 339 are each glycosylated (N-linked (GlcNAc...) asparagine). Cysteine 346 and cysteine 352 are joined by a disulfide. Positions 369 to 393 (FGWAFLALFRLMTQDFWENLFQLTL) form an intramembrane region, pore-forming. Topologically, residues 394 to 400 (RAAGKTY) are extracellular. Residues 401 to 421 (MIFFVVVIFLGSFYLINLILA) form a helical membrane-spanning segment. Over 422 to 515 (VVAMAYAEQN…RCLSAIVMDP (94 aa)) the chain is Cytoplasmic. The stretch at 497 to 768 (CCSCWRHLKR…QIAVNRIKRA (272 aa)) is one II repeat. A helical transmembrane segment spans residues 516-534 (FVDLGITICIILNTIFMAM). The Extracellular segment spans residues 535-545 (EHYPMSADFEE). Residues 546–565 (LLSVGNLVFTGIFTCEMVLK) traverse the membrane as a helical segment. The Cytoplasmic portion of the chain corresponds to 566–579 (ILAMDPYFYFQVGW). A helical transmembrane segment spans residues 580–599 (NIFDSIIVTMSLVELGLANV). At 600 to 601 (QG) the chain is on the extracellular side. The chain crosses the membrane as a helical span at residues 602 to 619 (LSVLRSFRLMRVFKLAKS). The Cytoplasmic portion of the chain corresponds to 620 to 635 (WPTLNMLIKIIGNSVG). Residues 636–654 (ALGNLTLVLAIIVFIFAVV) traverse the membrane as a helical segment. Over 655 to 683 (GMQLFGKNYKDCVCRISEDCKLPRWHMND) the chain is Extracellular. The cysteines at positions 668 and 674 are disulfide-linked. Positions 684–704 (FFHAFLIIFRVLCGEWIDTMW) form an intramembrane region, pore-forming. Residues 705-715 (DCMEVSGQTMC) lie on the Extracellular side of the membrane. Residues cysteine 706 and cysteine 715 are joined by a disulfide bond. A helical transmembrane segment spans residues 716–734 (LIVYMMVLVIGNLVVLNLF). Residues 735–915 (LALLLSSFSG…ACFIIVENNY (181 aa)) are Cytoplasmic-facing. A disordered region spans residues 824 to 865 (EAESDSEDSDDDDVDEDKHSRCDESSFCSTVQDPEVKENEAD). A compositionally biased stretch (acidic residues) spans 825–838 (AESDSEDSDDDDVD). An III repeat occupies 896 to 1211 (KGKVWCNIRR…KKYYNAMKKL (316 aa)). A helical transmembrane segment spans residues 916-933 (FESFIVFMILLSSGALAF). Topologically, residues 934 to 946 (EDIYLEKHQLIKT) are extracellular. Residues 947–965 (ILEYADKVFTYVFVVEMVL) form a helical membrane-spanning segment. Topologically, residues 966–979 (KWFAYGFKSYFSNA) are cytoplasmic. The helical transmembrane segment at 980 to 998 (WCWLDFLIVDVSLVSLTAN) threads the bilayer. Residues 999-1006 (ILGYSELG) lie on the Extracellular side of the membrane. A helical transmembrane segment spans residues 1007-1025 (AIKSLRTLRALRPLRALSR). At 1026-1042 (FEGMRVVVNALVGAVPS) the chain is on the cytoplasmic side. The chain crosses the membrane as a helical span at residues 1043 to 1062 (IFNVLLVCLIFWLIFSIMGV). Residues 1063–1115 (NLFAGKFSYCFNETSQEQFDKKIVNNKTECIALIEANFTEVRWKNLKVNYDNV) are Extracellular-facing. A disulfide bridge links cysteine 1072 with cysteine 1092. N-linked (GlcNAc...) asparagine glycans are attached at residues asparagine 1074 and asparagine 1088. Positions 1116 to 1137 (GIGYLSLLQVATFKGWMEIMYA) form an intramembrane region, pore-forming. Over 1138 to 1154 (AVDSRDVESQPIYEVNI) the chain is Extracellular. The chain crosses the membrane as a helical span at residues 1155 to 1176 (YMYLYFVIFIIFGSFFTLNLFI). Residues 1177 to 1239 (GVIIDNFNQQ…LVFDLVTKQI (63 aa)) are Cytoplasmic-facing. The tract at residues 1195-1197 (IFM) is important for rapid channel inactivation. The IV repeat unit spans residues 1220-1517 (VPRPENALQG…WEKFDPDATQ (298 aa)). A helical membrane pass occupies residues 1240 to 1257 (FDVFIMVLICLNMVTMMV). The Extracellular segment spans residues 1258–1268 (ETDEQTKEKED). The helical transmembrane segment at 1269-1287 (ILYWINVIFIVIFTTECIL) threads the bilayer. Residues 1288-1299 (KTIALRRHYFSI) are Cytoplasmic-facing. Residues 1300-1317 (GWNVFDFVVVILSILGLL) form a helical membrane-spanning segment. The Extracellular segment spans residues 1318 to 1330 (LADIIEKYFVSPT). A helical membrane pass occupies residues 1331-1347 (LFRVIRLARIGRVLRLI). Over 1348–1366 (RGAKGIRTLLFALMMSLPA) the chain is Cytoplasmic. A helical membrane pass occupies residues 1367–1384 (LFNIGLLLFLIMFIFSIF). At 1385–1406 (GMSNFAYVKKEAMIDDMFNFET) the chain is on the extracellular side. Positions 1407–1429 (FGNSMICLFMITTSAGWDGLLSP) form an intramembrane region, pore-forming. Residues 1430–1458 (IMNKPPDCDPDLENPGTTVRGNCGSPAIG) lie on the Extracellular side of the membrane. Cysteine 1437 and cysteine 1452 form a disulfide bridge. The helical transmembrane segment at 1459-1481 (IVFFSTYIIMSFLVVVNMYIAII) threads the bilayer. Residues 1482–1715 (LENFNVATEE…LGTSERESLV (234 aa)) lie on the Cytoplasmic side of the membrane. Residues 1611–1640 (EEVAARVIQRAYRKYLLQRTVRLASFTYRE) form the IQ domain.

The protein belongs to the sodium channel (TC 1.A.1.10) family. Nav1.4/SCN4A subfamily. Voltage-gated sodium (Nav) channels consist of an ion-conducting alpha subunit which is functional on its own associated with regulatory beta subunits.

The protein resides in the cell membrane. It carries out the reaction Na(+)(in) = Na(+)(out). In terms of biological role, pore-forming subunit of a voltage-gated sodium (Nav) channel that directly mediates the depolarizing phase of action potentials in excitable membranes. Navs, also called VGSCs (voltage-gated sodium channels) or VDSCs (voltage-dependent sodium channels), operate by switching between closed and open conformations depending on the voltage difference across the membrane. In the open conformation they allow Na(+) ions to selectively pass through the pore, along their electrochemical gradient. The influx of Na+ ions provokes membrane depolarization, initiating the propagation of electrical signals throughout cells and tissues. This chain is Sodium channel protein type 4 subunit alpha B (scn4ab), found in Tetraodon nigroviridis (Spotted green pufferfish).